Reading from the N-terminus, the 186-residue chain is Elongation factor P (186 aa).

This sequence belongs to the elongation factor P family.

It localises to the cytoplasm. Its pathway is protein biosynthesis; polypeptide chain elongation. In terms of biological role, involved in peptide bond synthesis. Stimulates efficient translation and peptide-bond synthesis on native or reconstituted 70S ribosomes in vitro. Probably functions indirectly by altering the affinity of the ribosome for aminoacyl-tRNA, thus increasing their reactivity as acceptors for peptidyl transferase. This chain is Elongation factor P, found in Cupriavidus metallidurans (strain ATCC 43123 / DSM 2839 / NBRC 102507 / CH34) (Ralstonia metallidurans).